The primary structure comprises 596 residues: Elongation factor 4 (596 aa).

Positions 2 to 184 (KHIRNFSIIA…VIVEQIPPPE (183 aa)) constitute a tr-type G domain. GTP contacts are provided by residues 14–19 (DHGKST) and 131–134 (NKID).

It belongs to the TRAFAC class translation factor GTPase superfamily. Classic translation factor GTPase family. LepA subfamily.

It is found in the cell inner membrane. The enzyme catalyses GTP + H2O = GDP + phosphate + H(+). Required for accurate and efficient protein synthesis under certain stress conditions. May act as a fidelity factor of the translation reaction, by catalyzing a one-codon backward translocation of tRNAs on improperly translocated ribosomes. Back-translocation proceeds from a post-translocation (POST) complex to a pre-translocation (PRE) complex, thus giving elongation factor G a second chance to translocate the tRNAs correctly. Binds to ribosomes in a GTP-dependent manner. The chain is Elongation factor 4 from Shewanella piezotolerans (strain WP3 / JCM 13877).